The chain runs to 583 residues: CD166 antigen (583 aa).

Residues 1-27 form the signal peptide; it reads MASKVSPSCRLVFCLLISAAVLRPGLG. Ig-like V-type domains follow at residues 28 to 120 and 125 to 234; these read WYTV…TEDN and PTLV…KTIY. Residues 28 to 527 lie on the Extracellular side of the membrane; that stretch reads WYTVNSAYGD…NREKVNDQAK (500 aa). 2 cysteine pairs are disulfide-bonded: Cys43–Cys113 and Cys157–Cys220. 8 N-linked (GlcNAc...) asparagine glycosylation sites follow: Asn95, Asn167, Asn265, Asn306, Asn361, Asn457, Asn480, and Asn499. Ig-like C2-type domains lie at 245-328, 333-409, and 416-501; these read PTEQ…TTIT, DLSL…ESLT, and PQIK…LNVS. Cystine bridges form between Cys270–Cys313, Cys354–Cys392, and Cys435–Cys485. The helical transmembrane segment at 528 to 549 threads the bilayer; it reads LIVGIVVGLLLAALVAGVVYWL. The Cytoplasmic portion of the chain corresponds to 550–583; the sequence is YMKKSKTASKHVNKDLGNMEENKKLEENNHKTEA. The segment at 562–583 is disordered; it reads NKDLGNMEENKKLEENNHKTEA. Basic and acidic residues predominate over residues 569–583; the sequence is EENKKLEENNHKTEA.

As to quaternary structure, homodimer. Interacts (via extracellular domain) with CD6 (via extracellular domain). Homodimerization and interaction with CD6 involve the same region and cannot occur simultaneously. The affinity for CD6 is much higher than the affinity for self-association. Interacts (via glycosylated extracellular domain) with LGALS1 and LGALS3. Interaction with LGALS1 or LGALS3 inhibits interaction with CD6. Post-translationally, glycosylated. Detected on brain motor neurons, in differentiating retinal ganglion cells and in adult retina. Detected on leukocytes and on lymphatic endothelial cells. Detected in spleen B cells and T-cells (at protein level). Detected in adult brain and embryonic spinal cord. Expressed at high levels in the brain, and lung, and at lower levels in the liver, and the kidney, as well as by activated leukocytes.

It localises to the cell membrane. The protein resides in the cell projection. Its subcellular location is the axon. The protein localises to the dendrite. Functionally, cell adhesion molecule that mediates both heterotypic cell-cell contacts via its interaction with CD6, as well as homotypic cell-cell contacts. Promotes T-cell activation and proliferation via its interactions with CD6. Contributes to the formation and maturation of the immunological synapse via its interactions with CD6. Mediates homotypic interactions with cells that express ALCAM. Mediates attachment of dendritic cells onto endothelial cells via homotypic interaction. Inhibits endothelial cell migration and promotes endothelial tube formation via homotypic interactions. Required for normal organization of the lymph vessel network. Required for normal hematopoietic stem cell engraftment in the bone marrow. Plays a role in hematopoiesis; required for normal numbers of hematopoietic stem cells in bone marrow. Promotes in vitro osteoblast proliferation and differentiation. Promotes neurite extension, axon growth and axon guidance; axons grow preferentially on surfaces that contain ALCAM. Mediates outgrowth and pathfinding for retinal ganglion cell axons. The chain is CD166 antigen (Alcam) from Mus musculus (Mouse).